A 352-amino-acid chain; its full sequence is N-acetyl-gamma-glutamyl-phosphate reductase (352 aa).

This sequence belongs to the NAGSA dehydrogenase family. Type 1 subfamily.

It localises to the cytoplasm. The catalysed reaction is N-acetyl-L-glutamate 5-semialdehyde + phosphate + NADP(+) = N-acetyl-L-glutamyl 5-phosphate + NADPH + H(+). It functions in the pathway amino-acid biosynthesis; L-arginine biosynthesis; N(2)-acetyl-L-ornithine from L-glutamate: step 3/4. Catalyzes the NADPH-dependent reduction of N-acetyl-5-glutamyl phosphate to yield N-acetyl-L-glutamate 5-semialdehyde. The sequence is that of N-acetyl-gamma-glutamyl-phosphate reductase from Nostoc ellipsosporum.